The following is a 279-amino-acid chain: 4-diphosphocytidyl-2-C-methyl-D-erythritol kinase (279 aa).

Residue Lys-9 is part of the active site. 93 to 103 (PMGAGLGGGSS) lines the ATP pocket. Asp-135 is a catalytic residue.

This sequence belongs to the GHMP kinase family. IspE subfamily.

The catalysed reaction is 4-CDP-2-C-methyl-D-erythritol + ATP = 4-CDP-2-C-methyl-D-erythritol 2-phosphate + ADP + H(+). It functions in the pathway isoprenoid biosynthesis; isopentenyl diphosphate biosynthesis via DXP pathway; isopentenyl diphosphate from 1-deoxy-D-xylulose 5-phosphate: step 3/6. Catalyzes the phosphorylation of the position 2 hydroxy group of 4-diphosphocytidyl-2C-methyl-D-erythritol. This is 4-diphosphocytidyl-2-C-methyl-D-erythritol kinase from Acinetobacter baylyi (strain ATCC 33305 / BD413 / ADP1).